The chain runs to 564 residues: Bifunctional sesquiterpene synthase 1 (564 aa).

Mg(2+) is bound by residues Asp-317, Asp-321, Asp-461, and Glu-469. Residues 317–321 carry the DDXXD motif motif; the sequence is DDTFD.

Belongs to the terpene synthase family. It depends on Mg(2+) as a cofactor.

It carries out the reaction (2E,6E)-farnesyl diphosphate = alpha-copaene + diphosphate. The catalysed reaction is (2E,6E)-farnesyl diphosphate = delta-cadinene + diphosphate. The protein operates within secondary metabolite biosynthesis; terpenoid biosynthesis. Sesquiterpene synthase converting farnesyl diphosphate to alpha copaene and delta-cadinene as the major products. This Phyla dulcis (Aztec sweet herb) protein is Bifunctional sesquiterpene synthase 1.